Consider the following 122-residue polypeptide: Small ribosomal subunit protein uS13 (122 aa).

Residues 89 to 122 (GLRHRRGLPARGQRTKTNARTRKGPRRGVAGKRK) are disordered.

The protein belongs to the universal ribosomal protein uS13 family. In terms of assembly, part of the 30S ribosomal subunit. Forms a loose heterodimer with protein S19. Forms two bridges to the 50S subunit in the 70S ribosome.

Functionally, located at the top of the head of the 30S subunit, it contacts several helices of the 16S rRNA. In the 70S ribosome it contacts the 23S rRNA (bridge B1a) and protein L5 of the 50S subunit (bridge B1b), connecting the 2 subunits; these bridges are implicated in subunit movement. Contacts the tRNAs in the A and P-sites. This is Small ribosomal subunit protein uS13 from Oleidesulfovibrio alaskensis (strain ATCC BAA-1058 / DSM 17464 / G20) (Desulfovibrio alaskensis).